We begin with the raw amino-acid sequence, 98 residues long: MTLIHMNILMAFSMSLVGLLMYRSHLMSALLCLEGMMLSLFVLATLTILSSHFTLANMMPIILLVFAACEAAIGLALLVMVSNTYGTDYVQNLNLLQC.

The next 3 helical transmembrane spans lie at Met-1 to Met-21, Ala-29 to Leu-49, and Ile-61 to Val-81.

Belongs to the complex I subunit 4L family. Core subunit of respiratory chain NADH dehydrogenase (Complex I) which is composed of 45 different subunits.

Its subcellular location is the mitochondrion inner membrane. The enzyme catalyses a ubiquinone + NADH + 5 H(+)(in) = a ubiquinol + NAD(+) + 4 H(+)(out). Its function is as follows. Core subunit of the mitochondrial membrane respiratory chain NADH dehydrogenase (Complex I) which catalyzes electron transfer from NADH through the respiratory chain, using ubiquinone as an electron acceptor. Part of the enzyme membrane arm which is embedded in the lipid bilayer and involved in proton translocation. The sequence is that of NADH-ubiquinone oxidoreductase chain 4L (MT-ND4L) from Megaptera novaeangliae (Humpback whale).